Here is a 612-residue protein sequence, read N- to C-terminus: Elongation factor 4 (612 aa).

Residues 11–193 (KHIRNFSIIA…KLVTDVPAPT (183 aa)) enclose the tr-type G domain. GTP is bound by residues 23 to 28 (DHGKST) and 140 to 143 (NKID).

This sequence belongs to the TRAFAC class translation factor GTPase superfamily. Classic translation factor GTPase family. LepA subfamily.

It localises to the cell membrane. It carries out the reaction GTP + H2O = GDP + phosphate + H(+). Its function is as follows. Required for accurate and efficient protein synthesis under certain stress conditions. May act as a fidelity factor of the translation reaction, by catalyzing a one-codon backward translocation of tRNAs on improperly translocated ribosomes. Back-translocation proceeds from a post-translocation (POST) complex to a pre-translocation (PRE) complex, thus giving elongation factor G a second chance to translocate the tRNAs correctly. Binds to ribosomes in a GTP-dependent manner. The protein is Elongation factor 4 of Latilactobacillus sakei subsp. sakei (strain 23K) (Lactobacillus sakei subsp. sakei).